The primary structure comprises 258 residues: UPF0246 protein YaaA (258 aa).

It belongs to the UPF0246 family.

The chain is UPF0246 protein YaaA from Shigella sonnei (strain Ss046).